The following is a 210-amino-acid chain: Na(+)-translocating NADH-quinone reductase subunit D (210 aa).

Transmembrane regions (helical) follow at residues 14 to 34 (PIIS…ALAV), 42 to 62 (LVMT…ISMI), 72 to 92 (IIVQ…VLQA), 103 to 123 (VFVG…AYAM), 131 to 151 (FMDG…VGFV), and 178 to 198 (NGLL…IWII).

The protein belongs to the NqrDE/RnfAE family. Composed of six subunits; NqrA, NqrB, NqrC, NqrD, NqrE and NqrF.

It is found in the cell inner membrane. It carries out the reaction a ubiquinone + n Na(+)(in) + NADH + H(+) = a ubiquinol + n Na(+)(out) + NAD(+). In terms of biological role, NQR complex catalyzes the reduction of ubiquinone-1 to ubiquinol by two successive reactions, coupled with the transport of Na(+) ions from the cytoplasm to the periplasm. NqrA to NqrE are probably involved in the second step, the conversion of ubisemiquinone to ubiquinol. This chain is Na(+)-translocating NADH-quinone reductase subunit D, found in Shewanella loihica (strain ATCC BAA-1088 / PV-4).